We begin with the raw amino-acid sequence, 60 residues long: Large ribosomal subunit protein bL32 (60 aa).

The span at 1-16 shows a compositional bias: basic residues; that stretch reads MAVPKKKTSKSRKNMR. The tract at residues 1-20 is disordered; that stretch reads MAVPKKKTSKSRKNMRRAHD.

It belongs to the bacterial ribosomal protein bL32 family.

The chain is Large ribosomal subunit protein bL32 from Geobacter metallireducens (strain ATCC 53774 / DSM 7210 / GS-15).